The following is a 179-amino-acid chain: Inosine/xanthosine triphosphatase (179 aa).

A substrate-binding site is contributed by 8 to 13; sequence TTNPAK. The Mg(2+) site is built by D38 and E68. A substrate-binding site is contributed by 68 to 69; that stretch reads EA.

It belongs to the YjjX NTPase family. As to quaternary structure, homodimer. Mg(2+) is required as a cofactor. Mn(2+) serves as cofactor.

The enzyme catalyses XTP + H2O = XDP + phosphate + H(+). It carries out the reaction ITP + H2O = IDP + phosphate + H(+). Phosphatase that hydrolyzes non-canonical purine nucleotides such as XTP and ITP to their respective diphosphate derivatives. Probably excludes non-canonical purines from DNA/RNA precursor pool, thus preventing their incorporation into DNA/RNA and avoiding chromosomal lesions. This is Inosine/xanthosine triphosphatase from Pectobacterium carotovorum subsp. carotovorum (strain PC1).